The sequence spans 1146 residues: Ankyrin repeat and fibronectin type-III domain-containing protein 1 (1146 aa).

2 ANK repeats span residues 133 to 162 (QGNEAMFEAVEQQDMDAVQILLYQYTPEEL) and 170 to 199 (EGLTPLDIAIMTNNVPIARILLRTGARESP). Positions 270–366 (MPTNVCLMVT…TTTPACASPS (97 aa)) constitute a Fibronectin type-III domain. The tract at residues 607-614 (GLYLGYLK) is highly conserved peptide sequence. Disordered regions lie at residues 855 to 887 (NSTSSSHIDCLPSPPPSPEMHRRKTVSDSQPCS), 945 to 964 (VKTPLGPGQDPQGEGPNPDH), and 1106 to 1146 (PWAS…SSML). Polar residues predominate over residues 1131–1146 (EGPTASPMSEILSSML).

Functionally, may play a role in neuronal function. This chain is Ankyrin repeat and fibronectin type-III domain-containing protein 1, found in Homo sapiens (Human).